A 162-amino-acid polypeptide reads, in one-letter code: Ribonuclease P protein component (162 aa).

The tract at residues 1–63 (MDEKDLATQP…PPAAGGKLLS (63 aa)) is disordered. Residues 21–38 (GPHEDPRRQEGVEAEKAE) are compositionally biased toward basic and acidic residues.

Belongs to the RnpA family. As to quaternary structure, consists of a catalytic RNA component (M1 or rnpB) and a protein subunit.

It carries out the reaction Endonucleolytic cleavage of RNA, removing 5'-extranucleotides from tRNA precursor.. In terms of biological role, RNaseP catalyzes the removal of the 5'-leader sequence from pre-tRNA to produce the mature 5'-terminus. It can also cleave other RNA substrates such as 4.5S RNA. The protein component plays an auxiliary but essential role in vivo by binding to the 5'-leader sequence and broadening the substrate specificity of the ribozyme. The chain is Ribonuclease P protein component from Thermus scotoductus.